The sequence spans 757 residues: Dapper homolog 2 (757 aa).

The segment at 1–281 is inhibition of Nodal signaling; the sequence is MWAPSGQGPA…QSPLFALPKE (281 aa). The stretch at 55–107 forms a coiled coil; the sequence is RGQELRLEAALTALREQLSRLRRQDAGLKTHLDQLDQQISELQLDVSRSSCEA. Disordered stretches follow at residues 486–540, 584–684, and 696–728; these read RRRV…CSES, RWQS…EGCF, and AEAG…PPVP. Basic and acidic residues-rich tracts occupy residues 505–516 and 631–644; these read ERQRVTERDPSR and ACAR…EHSA. A compositionally biased stretch (polar residues) spans 645-656; that stretch reads DCTSLYHSTIAE. Over residues 664–673 the composition is skewed to basic and acidic residues; it reads SDHTANRFGD. The PDZ-binding signature appears at 754–757; it reads MTMV.

This sequence belongs to the dapper family. Can form homodimers and heterodimers with DACT1 or DACT3. Interacts with CSNK1D, PKA catalytic subunit, PKC-type kinase, CSNK2B, DVL1, DVL2, DVL3, VANGL1, VANGL2, TGFBR1, CTNNB1, CTNND2, CTNND1, LEF1, TCF7, TCF7L1 and HDAC1. Expressed in kidney (inner medullary collecting duct). Expressed in epidermal keratinocytes and hair follicles.

Involved in regulation of intracellular signaling pathways during development. Negatively regulates the Nodal signaling pathway, possibly by promoting the lysosomal degradation of Nodal receptors, such as TGFBR1. May be involved in control of the morphogenetic behavior of kidney ureteric bud cells by keeping cells epithelial and restraining their mesenchymal character. May play an inhibitory role in the re-epithelialization of skin wounds by attenuating TGF-beta signaling. This is Dapper homolog 2 (Dact2) from Mus musculus (Mouse).